Reading from the N-terminus, the 232-residue chain is Proteasome subunit alpha (232 aa).

This sequence belongs to the peptidase T1A family. As to quaternary structure, the 20S proteasome core is composed of 14 alpha and 14 beta subunits that assemble into four stacked heptameric rings, resulting in a barrel-shaped structure. The two inner rings, each composed of seven catalytic beta subunits, are sandwiched by two outer rings, each composed of seven alpha subunits. The catalytic chamber with the active sites is on the inside of the barrel. Has a gated structure, the ends of the cylinder being occluded by the N-termini of the alpha-subunits. Is capped by the proteasome-associated ATPase, ARC.

The protein localises to the cytoplasm. Its pathway is protein degradation; proteasomal Pup-dependent pathway. Its activity is regulated as follows. The formation of the proteasomal ATPase ARC-20S proteasome complex, likely via the docking of the C-termini of ARC into the intersubunit pockets in the alpha-rings, may trigger opening of the gate for substrate entry. Interconversion between the open-gate and close-gate conformations leads to a dynamic regulation of the 20S proteasome proteolysis activity. Its function is as follows. Component of the proteasome core, a large protease complex with broad specificity involved in protein degradation. The sequence is that of Proteasome subunit alpha from Acidimicrobium ferrooxidans (strain DSM 10331 / JCM 15462 / NBRC 103882 / ICP).